The following is a 175-amino-acid chain: Large ribosomal subunit protein uL10 (175 aa).

The protein belongs to the universal ribosomal protein uL10 family. Part of the ribosomal stalk of the 50S ribosomal subunit. The N-terminus interacts with L11 and the large rRNA to form the base of the stalk. The C-terminus forms an elongated spine to which L12 dimers bind in a sequential fashion forming a multimeric L10(L12)X complex.

In terms of biological role, forms part of the ribosomal stalk, playing a central role in the interaction of the ribosome with GTP-bound translation factors. The chain is Large ribosomal subunit protein uL10 from Prochlorococcus marinus (strain MIT 9301).